The primary structure comprises 382 residues: 8-amino-7-oxononanoate synthase (382 aa).

Arg-26 contributes to the substrate binding site. 104-105 (GY) is a binding site for pyridoxal 5'-phosphate. His-129 provides a ligand contact to substrate. Residues Ser-175, 200–203 (DEAH), and 232–235 (TLSK) contribute to the pyridoxal 5'-phosphate site. Lys-235 is subject to N6-(pyridoxal phosphate)lysine. Thr-345 is a binding site for substrate.

It belongs to the class-II pyridoxal-phosphate-dependent aminotransferase family. BioF subfamily. As to quaternary structure, homodimer. Pyridoxal 5'-phosphate serves as cofactor.

It catalyses the reaction 6-carboxyhexanoyl-[ACP] + L-alanine + H(+) = (8S)-8-amino-7-oxononanoate + holo-[ACP] + CO2. It functions in the pathway cofactor biosynthesis; biotin biosynthesis. Catalyzes the decarboxylative condensation of pimeloyl-[acyl-carrier protein] and L-alanine to produce 8-amino-7-oxononanoate (AON), [acyl-carrier protein], and carbon dioxide. In Mycobacterium sp. (strain KMS), this protein is 8-amino-7-oxononanoate synthase.